The sequence spans 482 residues: Isoxanthopterin deaminase (482 aa).

Residues H74 and H76 each coordinate Zn(2+). Q79 lines the substrate pocket. Residue H246 participates in Zn(2+) binding. The substrate site is built by E249 and H283. Residues H283 and D334 each coordinate Zn(2+).

This sequence belongs to the metallo-dependent hydrolases superfamily. ATZ/TRZ family. Requires Zn(2+) as cofactor.

The enzyme catalyses a 2-amino-4-hydroxypteridine + H2O + H(+) = a 2,4-dihydroxypteridine + NH4(+). This chain is Isoxanthopterin deaminase, found in Unknown prokaryotic organism.